We begin with the raw amino-acid sequence, 352 residues long: Ion-translocating oxidoreductase complex subunit D (352 aa).

Helical transmembrane passes span 20–40, 42–62, 89–109, and 123–143; these read IMLL…WFFG, GTLV…ALVL, IPPL…VIIA, and PAMI…TSWL. Thr-187 bears the FMN phosphoryl threonine mark. A run of 5 helical transmembrane segments spans residues 214–234, 242–262, 267–287, 301–321, and 322–342; these read ILAG…GVWL, WHIP…GWLF, LAAP…FFIL, LIFG…GGYP, and DGVA…DYYT.

Belongs to the NqrB/RnfD family. In terms of assembly, the complex is composed of six subunits: RsxA, RsxB, RsxC, RsxD, RsxE and RsxG. Requires FMN as cofactor.

It localises to the cell inner membrane. Part of a membrane-bound complex that couples electron transfer with translocation of ions across the membrane. Required to maintain the reduced state of SoxR. In Escherichia coli O81 (strain ED1a), this protein is Ion-translocating oxidoreductase complex subunit D.